Reading from the N-terminus, the 82-residue chain is Small ribosomal subunit protein bS18 (82 aa).

It belongs to the bacterial ribosomal protein bS18 family. As to quaternary structure, part of the 30S ribosomal subunit. Forms a tight heterodimer with protein bS6.

In terms of biological role, binds as a heterodimer with protein bS6 to the central domain of the 16S rRNA, where it helps stabilize the platform of the 30S subunit. The sequence is that of Small ribosomal subunit protein bS18 from Sinorhizobium fredii (strain NBRC 101917 / NGR234).